The following is a 226-amino-acid chain: N-(5'-phosphoribosyl)anthranilate isomerase (226 aa).

Belongs to the TrpF family.

The catalysed reaction is N-(5-phospho-beta-D-ribosyl)anthranilate = 1-(2-carboxyphenylamino)-1-deoxy-D-ribulose 5-phosphate. It participates in amino-acid biosynthesis; L-tryptophan biosynthesis; L-tryptophan from chorismate: step 3/5. The polypeptide is N-(5'-phosphoribosyl)anthranilate isomerase (TRP1) (Candida albicans (strain SC5314 / ATCC MYA-2876) (Yeast)).